A 247-amino-acid polypeptide reads, in one-letter code: ATP synthase subunit a, chloroplastic (247 aa).

The next 5 membrane-spanning stretches (helical) occupy residues 38–58, 95–115, 134–154, 199–219, and 220–240; these read QVLI…VIAV, VPFI…GALL, INTT…AGLS, LVVV…VMFL, and GLFT…AYIG.

It belongs to the ATPase A chain family. F-type ATPases have 2 components, CF(1) - the catalytic core - and CF(0) - the membrane proton channel. CF(1) has five subunits: alpha(3), beta(3), gamma(1), delta(1), epsilon(1). CF(0) has four main subunits: a, b, b' and c.

It localises to the plastid. The protein resides in the chloroplast thylakoid membrane. Functionally, key component of the proton channel; it plays a direct role in the translocation of protons across the membrane. The sequence is that of ATP synthase subunit a, chloroplastic from Agrostis stolonifera (Creeping bentgrass).